The sequence spans 245 residues: Biosynthetic peptidoglycan transglycosylase (245 aa).

A helical membrane pass occupies residues 19–41; the sequence is CLRWVLAAPLLFAAASVLQVLFL.

This sequence belongs to the glycosyltransferase 51 family.

The protein resides in the cell inner membrane. It carries out the reaction [GlcNAc-(1-&gt;4)-Mur2Ac(oyl-L-Ala-gamma-D-Glu-L-Lys-D-Ala-D-Ala)](n)-di-trans,octa-cis-undecaprenyl diphosphate + beta-D-GlcNAc-(1-&gt;4)-Mur2Ac(oyl-L-Ala-gamma-D-Glu-L-Lys-D-Ala-D-Ala)-di-trans,octa-cis-undecaprenyl diphosphate = [GlcNAc-(1-&gt;4)-Mur2Ac(oyl-L-Ala-gamma-D-Glu-L-Lys-D-Ala-D-Ala)](n+1)-di-trans,octa-cis-undecaprenyl diphosphate + di-trans,octa-cis-undecaprenyl diphosphate + H(+). It participates in cell wall biogenesis; peptidoglycan biosynthesis. Peptidoglycan polymerase that catalyzes glycan chain elongation from lipid-linked precursors. In Xanthomonas oryzae pv. oryzae (strain KACC10331 / KXO85), this protein is Biosynthetic peptidoglycan transglycosylase.